We begin with the raw amino-acid sequence, 109 residues long: Nucleoid-associated protein ECA1177 (109 aa).

It belongs to the YbaB/EbfC family. In terms of assembly, homodimer.

The protein resides in the cytoplasm. It is found in the nucleoid. Binds to DNA and alters its conformation. May be involved in regulation of gene expression, nucleoid organization and DNA protection. This is Nucleoid-associated protein ECA1177 from Pectobacterium atrosepticum (strain SCRI 1043 / ATCC BAA-672) (Erwinia carotovora subsp. atroseptica).